The following is a 442-amino-acid chain: Protein PhoH2 (442 aa).

The PINc domain occupies 3 to 135; sequence KIYVLDTNVL…LVSKDVLVRV (133 aa). Residue 259–266 coordinates ATP; it reads GKAGTGKT.

The protein in the N-terminal section; belongs to the PINc/VapC protein family. It in the C-terminal section; belongs to the PhoH family.

It carries out the reaction n ATP + n H2O + wound RNA = n ADP + n phosphate + unwound RNA.. The catalysed reaction is ATP + H2O = ADP + phosphate + H(+). The enzyme catalyses GTP + H2O = GDP + phosphate + H(+). Its function is as follows. Unwinds and/or cleaves 5'-tailed RNA in vitro. Has ATPase and GTPase activities. Unlike the protein in mycobacteria there does not seem to be an antitoxin gene upstream, suggesting this is not a toxin-antitoxin system. This is Protein PhoH2 from Bacillus subtilis (strain 168).